The sequence spans 403 residues: Fasciclin-like arabinogalactan protein 2 (403 aa).

The first 26 residues, 1–26 (MAYLRRAATALVLIFQLHLFLSLSNA), serve as a signal peptide directing secretion. FAS1 domains follow at residues 27 to 174 (HNIT…SQVL) and 187 to 326 (SDLI…DKVL). Asn-28, Asn-130, Asn-164, and Asn-248 each carry an N-linked (GlcNAc...) asparagine glycan. Positions 338-371 (SAPAPKSSKKKPKNAEADADGPSADAPSDDDVEV) are disordered. A lipid anchor (GPI-anchor amidated alanine) is attached at Ala-378. The propeptide at 379–403 (VSAMITRTSNVVTAIVGLCFGVWLM) is removed in mature form.

The protein belongs to the fasciclin-like AGP family. In terms of tissue distribution, expressed mainly in flowers and to a lesser extent in leaves and roots.

The protein localises to the cell membrane. Its function is as follows. May be a cell surface adhesion protein. The sequence is that of Fasciclin-like arabinogalactan protein 2 (FLA2) from Arabidopsis thaliana (Mouse-ear cress).